The chain runs to 388 residues: Outer membrane protein assembly factor BamB (388 aa).

An N-terminal signal peptide occupies residues 1 to 17; it reads MVLSLLSVMLLSGYKFL.

The protein belongs to the BamB family. Part of the Bam complex, which is composed of the outer membrane protein BamA, and four lipoproteins BamB, BamC, BamD and BamE.

The protein localises to the cell outer membrane. Its function is as follows. Part of the outer membrane protein assembly complex, which is involved in assembly and insertion of beta-barrel proteins into the outer membrane. The chain is Outer membrane protein assembly factor BamB from Moranella endobia (strain PCIT).